The following is a 247-amino-acid chain: Caffeoyl-CoA O-methyltransferase (247 aa).

Lys-21 is a substrate binding site. S-adenosyl-L-methionine contacts are provided by residues Thr-63, Glu-85, 87–88 (GV), Ser-93, Asp-111, and Ala-140. A substrate-binding site is contributed by Asp-163. Position 163 (Asp-163) interacts with a divalent metal cation. Residue Asp-165 participates in S-adenosyl-L-methionine binding. Residues Asp-189 and Asn-190 each coordinate a divalent metal cation. Substrate is bound at residue Asn-194.

It belongs to the class I-like SAM-binding methyltransferase superfamily. Cation-dependent O-methyltransferase family. CCoAMT subfamily. The cofactor is a divalent metal cation.

The catalysed reaction is (E)-caffeoyl-CoA + S-adenosyl-L-methionine = (E)-feruloyl-CoA + S-adenosyl-L-homocysteine + H(+). It functions in the pathway aromatic compound metabolism; phenylpropanoid biosynthesis. In terms of biological role, methylates caffeoyl-CoA to feruloyl-CoA and 5-hydroxyferuloyl-CoA to sinapoyl-CoA. Plays a role in the synthesis of feruloylated polysaccharides. Involved in the reinforcement of the plant cell wall. Also involved in the responding to wounding or pathogen challenge by the increased formation of cell wall-bound ferulic acid polymers. This is Caffeoyl-CoA O-methyltransferase from Populus tremuloides (Quaking aspen).